The sequence spans 470 residues: Proton-coupled amino acid transporter 3 (470 aa).

Residues Met1–Gln46 lie on the Cytoplasmic side of the membrane. Polar residues predominate over residues Ser10–Gln20. The segment at Ser10–Asn33 is disordered. Residues Ser21–Ser31 show a composition bias toward low complexity. Residues Thr47–Ile67 traverse the membrane as a helical segment. The Extracellular segment spans residues Lys68–Gly71. The helical transmembrane segment at Leu72 to Ile92 threads the bilayer. Topologically, residues Leu93–Thr137 are cytoplasmic. A helical transmembrane segment spans residues Val138–Ala158. Residues Asp159 to Pro185 lie on the Extracellular side of the membrane. A helical membrane pass occupies residues Ile186–Ile206. The Cytoplasmic segment spans residues Gln207–Lys210. A helical membrane pass occupies residues Val211–Phe231. Over Glu232–Thr252 the chain is Extracellular. The chain crosses the membrane as a helical span at residues Phe253–Leu273. Topologically, residues Lys274 to Ser284 are cytoplasmic. A helical membrane pass occupies residues Phe285 to Gly305. Residues Tyr306–Gly337 are Extracellular-facing. The helical transmembrane segment at Ile338–Ile358 threads the bilayer. Residues Ser359–Leu367 are Cytoplasmic-facing. Residues Phe368 to Ile388 form a helical membrane-spanning segment. At Pro389–Asp392 the chain is on the extracellular side. The chain crosses the membrane as a helical span at residues Leu393–Leu413. Over Leu414 to Ser425 the chain is Cytoplasmic. The helical transmembrane segment at Cys426–Gly446 threads the bilayer. At Thr447–Ala470 the chain is on the extracellular side.

It belongs to the amino acid/polyamine transporter 2 family. Specifically expressed in testis.

The protein resides in the membrane. This Homo sapiens (Human) protein is Proton-coupled amino acid transporter 3 (SLC36A3).